Reading from the N-terminus, the 85-residue chain is MLGSVLTRRSSSGSDNRVFVYEVEGLRQNEQTDNNRYQIRNSSTIEIQVPYSRMNEEDRRITRLGGRIVNIRPAGENPTEDASEN.

A CpcD-like domain is found at 16 to 74; that stretch reads NRVFVYEVEGLRQNEQTDNNRYQIRNSSTIEIQVPYSRMNEEDRRITRLGGRIVNIRPA.

Belongs to the phycobilisome linker protein family.

The protein resides in the cellular thylakoid membrane. Rod linker protein, associated with phycocyanin. Linker polypeptides determine the state of aggregation and the location of the disk-shaped phycobiliprotein units within the phycobilisome and modulate their spectroscopic properties in order to mediate a directed and optimal energy transfer. In Microchaete diplosiphon (Fremyella diplosiphon), this protein is Phycobilisome 9.7 kDa linker polypeptide, phycocyanin-associated, rod (cpcD2).